Reading from the N-terminus, the 94-residue chain is Integration host factor subunit beta (94 aa).

The protein belongs to the bacterial histone-like protein family. As to quaternary structure, heterodimer of an alpha and a beta chain.

Its function is as follows. This protein is one of the two subunits of integration host factor, a specific DNA-binding protein that functions in genetic recombination as well as in transcriptional and translational control. This chain is Integration host factor subunit beta, found in Yersinia enterocolitica serotype O:8 / biotype 1B (strain NCTC 13174 / 8081).